Here is an 82-residue protein sequence, read N- to C-terminus: KTLLLTLVVVTIVCLDLGYTRRCFNQQSSEPQTNKSCPPGENSCYRKQWRDHRGTIIERGCGCPTVKPGVKLRCCESEDCNN.

A signal peptide spans 1–20; that stretch reads KTLLLTLVVVTIVCLDLGYT. 4 disulfides stabilise this stretch: C23–C44, C37–C61, C63–C74, and C75–C80.

It belongs to the three-finger toxin family. Short-chain subfamily. Type I alpha-neurotoxin sub-subfamily. In terms of tissue distribution, expressed by the venom gland.

It localises to the secreted. In terms of biological role, binds to muscle nicotinic acetylcholine receptor (nAChR) and inhibit acetylcholine from binding to the receptor, thereby impairing neuromuscular transmission. The chain is Short neurotoxin OKI-10 from Laticauda laticaudata (Blue-ringed sea krait).